Here is a 461-residue protein sequence, read N- to C-terminus: Putative long chain fatty acid-CoA ligase VraA (461 aa).

It belongs to the ATP-dependent AMP-binding enzyme family.

In Staphylococcus haemolyticus (strain JCSC1435), this protein is Putative long chain fatty acid-CoA ligase VraA (vraA).